Here is a 211-residue protein sequence, read N- to C-terminus: Ferric nitrobindin-like protein (211 aa).

A GXWXGXG motif is present at residues 21-27 (GRWRGPG). The segment at 104 to 130 (GVVQEGSDTRTEPGGAEPDPAGRRAPS) is disordered.

It belongs to the nitrobindin family.

This chain is Ferric nitrobindin-like protein, found in Beutenbergia cavernae (strain ATCC BAA-8 / DSM 12333 / CCUG 43141 / JCM 11478 / NBRC 16432 / NCIMB 13614 / HKI 0122).